Consider the following 620-residue polypeptide: UDP-glucose:protein N-beta-glucosyltransferase (620 aa).

It belongs to the glycosyltransferase 41 family.

The protein localises to the cytoplasm. The catalysed reaction is L-asparaginyl-[protein] + UDP-alpha-D-glucose = N(4)-(beta-D-glucosyl)-L-asparaginyl-[protein] + UDP + H(+). It participates in protein modification; protein glycosylation. Its function is as follows. Inverting glycosyltransferase that catalyzes the transfer of one glucose moiety from UDP-glucose to an asparagine residue in peptides and proteins containing the NX(S/T) motif, resulting in their modification with a beta-linked 1,N-glucose. Likely acts as a key component of a general protein glycosylation system. The polypeptide is UDP-glucose:protein N-beta-glucosyltransferase (Actinobacillus pleuropneumoniae serotype 5b (strain L20)).